The sequence spans 273 residues: Putative pyruvate, phosphate dikinase regulatory protein (273 aa).

153–160 lines the ADP pocket; it reads GVSRTSKS.

The protein belongs to the pyruvate, phosphate/water dikinase regulatory protein family. PDRP subfamily.

It carries out the reaction N(tele)-phospho-L-histidyl/L-threonyl-[pyruvate, phosphate dikinase] + ADP = N(tele)-phospho-L-histidyl/O-phospho-L-threonyl-[pyruvate, phosphate dikinase] + AMP + H(+). It catalyses the reaction N(tele)-phospho-L-histidyl/O-phospho-L-threonyl-[pyruvate, phosphate dikinase] + phosphate + H(+) = N(tele)-phospho-L-histidyl/L-threonyl-[pyruvate, phosphate dikinase] + diphosphate. Functionally, bifunctional serine/threonine kinase and phosphorylase involved in the regulation of the pyruvate, phosphate dikinase (PPDK) by catalyzing its phosphorylation/dephosphorylation. In Ehrlichia canis (strain Jake), this protein is Putative pyruvate, phosphate dikinase regulatory protein.